The chain runs to 132 residues: Phosphoribosyl-AMP cyclohydrolase (132 aa).

Residue aspartate 82 participates in Mg(2+) binding. Cysteine 83 serves as a coordination point for Zn(2+). Mg(2+) is bound by residues aspartate 84 and aspartate 86. Zn(2+) contacts are provided by cysteine 99 and cysteine 106.

This sequence belongs to the PRA-CH family. In terms of assembly, homodimer. Requires Mg(2+) as cofactor. The cofactor is Zn(2+).

It localises to the cytoplasm. The catalysed reaction is 1-(5-phospho-beta-D-ribosyl)-5'-AMP + H2O = 1-(5-phospho-beta-D-ribosyl)-5-[(5-phospho-beta-D-ribosylamino)methylideneamino]imidazole-4-carboxamide. It functions in the pathway amino-acid biosynthesis; L-histidine biosynthesis; L-histidine from 5-phospho-alpha-D-ribose 1-diphosphate: step 3/9. Its function is as follows. Catalyzes the hydrolysis of the adenine ring of phosphoribosyl-AMP. The polypeptide is Phosphoribosyl-AMP cyclohydrolase (Paramagnetospirillum magneticum (strain ATCC 700264 / AMB-1) (Magnetospirillum magneticum)).